A 191-amino-acid chain; its full sequence is Putative zinc metalloprotease MJ0611 (191 aa).

Residues 20 to 40 (AIAFIFSYPNFSILVFIISLI) traverse the membrane as a helical segment. Residue H49 participates in Zn(2+) binding. E50 is an active-site residue. A Zn(2+)-binding site is contributed by H53. The next 4 helical transmembrane spans lie at 73 to 93 (LILG…PGAV), 110 to 130 (LAGP…MLIF), 133 to 153 (GSLL…LAGF), and 171 to 191 (PFIW…MMFW).

It belongs to the peptidase M50B family. Requires Zn(2+) as cofactor.

The protein localises to the cell membrane. This is Putative zinc metalloprotease MJ0611 from Methanocaldococcus jannaschii (strain ATCC 43067 / DSM 2661 / JAL-1 / JCM 10045 / NBRC 100440) (Methanococcus jannaschii).